Reading from the N-terminus, the 54-residue chain is Potassium channel toxin alpha-KTx 14.1 (54 aa).

An N-terminal signal peptide occupies residues 1–23; sequence MKIFFAILLILAVCSMAIWTVNG.

It belongs to the short scorpion toxin superfamily. Potassium channel inhibitor family. Alpha-KTx 14 subfamily. In terms of processing, probably has three disulfide bridges. As to expression, expressed by the venom gland.

Its subcellular location is the secreted. Functionally, potential blocker of potassium channels. This Olivierus martensii (Manchurian scorpion) protein is Potassium channel toxin alpha-KTx 14.1.